Here is a 548-residue protein sequence, read N- to C-terminus: MDSQRNLLVIALLFVSFMIWQAWEQDKNPQPQTQQTTQTTTTAAGSAADQGVPASGQGKMITVKTDVLDLTINTRGGDVEQALLPAYPKELGSNEPFQLLETTPQFIYQAQSGLTGRDGPDNPANGPRPLYNVEKEAFVLADGQNELQVPMTYTDAAGNTFTKTFVFKRGDYAVNVNYSVQNAGEKPLEVSTFGQLKQSVNLPPHRDTGSSNFALHTFRGAAYSTPDEKYEKYKFDTIADNENLNVSSKGGWVAMLQQYFATAWIPRNDGTNNFYTANLGNGIVAIGYKAQPVLVQPGQTGAMTSTLWVGPEIQDKMAAVAPHLDLTVDYGWLWFISQPLFKLLKWIHSFVGNWGFSIIIITFIVRGIMYPLTKAQYTSMAKMRMLQPKIQAMRERLGDDKQRQSQEMMALYKAEKVNPLGGCFPLIIQMPIFLALYYMLMGSIELRHAPFALWIHDLSAQDPYYILPILMGVTMFFIQKMSPTTVTDPMQQKIMTFMPVIFTVFFLWFPSGLVLYYIVSNLVTIIQQQLIYRSLEKRGLHSREKKKS.

The chain crosses the membrane as a helical span at residues 6–26 (NLLVIALLFVSFMIWQAWEQD). The interval 28–56 (NPQPQTQQTTQTTTTAAGSAADQGVPASG) is disordered. Low complexity predominate over residues 29–42 (PQPQTQQTTQTTTT). 4 consecutive transmembrane segments (helical) span residues 350–370 (FVGNWGFSIIIITFIVRGIMY), 424–444 (FPLIIQMPIFLALYYMLMGSI), 458–478 (LSAQDPYYILPILMGVTMFFI), and 499–519 (PVIFTVFFLWFPSGLVLYYIV).

It belongs to the OXA1/ALB3/YidC family. Type 1 subfamily. In terms of assembly, interacts with the Sec translocase complex via SecD. Specifically interacts with transmembrane segments of nascent integral membrane proteins during membrane integration.

It localises to the cell inner membrane. Functionally, required for the insertion and/or proper folding and/or complex formation of integral membrane proteins into the membrane. Involved in integration of membrane proteins that insert both dependently and independently of the Sec translocase complex, as well as at least some lipoproteins. Aids folding of multispanning membrane proteins. The chain is Membrane protein insertase YidC from Salmonella heidelberg (strain SL476).